The sequence spans 1377 residues: Pleckstrin homology-like domain family B member 1 (1377 aa).

S51 carries the phosphoserine modification. In terms of domain architecture, FHA spans 64–125 (TVIGSAARDI…LTQGCMLCLG (62 aa)). At R131 the chain carries Asymmetric dimethylarginine. The interval 150–187 (RAPGPPYSPVPAESESLVNGNHTPQTATRGPSACASHS) is disordered. Residues 165–178 (SLVNGNHTPQTATR) are compositionally biased toward polar residues. 3 positions are modified to phosphoserine: S192, S220, and S223. 2 disordered regions span residues 211 to 334 (AAGK…LTDS) and 370 to 535 (GALS…GSFS). Positions 252 to 273 (SPAFSPLSSPASSGSCASHSPS) are enriched in low complexity. Over residues 288–303 (RSSSYHLALQPPQSRP) the composition is skewed to polar residues. A compositionally biased stretch (basic and acidic residues) spans 309 to 322 (ESPRLSRKGGHERP). Phosphoserine occurs at positions 324, 334, 381, 404, 430, 443, 461, 470, 489, and 501. Residues 456–473 (ELPPLSPSLSRRALSPLP) are compositionally biased toward low complexity. Over residues 481–491 (KLNREVAESPR) the composition is skewed to basic and acidic residues. R512 carries the post-translational modification Omega-N-methylarginine. Phosphoserine occurs at positions 518 and 520. Residue T522 is modified to Phosphothreonine. A phosphoserine mark is found at S533, S539, S551, S555, S563, S578, and S583. The segment covering 653-663 (PSRGLAGASGR) has biased composition (low complexity). Disordered regions lie at residues 653–707 (PSRG…APST), 936–1019 (TGPA…GSLP), and 1119–1138 (SMETSISTGGNSACSPDNMS). Basic and acidic residues predominate over residues 677–691 (ESMERSDEENLKEEC). A Phosphoserine modification is found at S678. Residues 683 to 809 (DEENLKEECS…TETKLFEDLE (127 aa)) are a coiled coil. Residues S971 and S1017 each carry the phosphoserine modification. Residues 971–992 (SPLPRTRSGPLPSSSGSSSSSS) show a composition bias toward low complexity. Residues 1009–1018 (LLTQNGTGSL) show a composition bias toward polar residues. The stretch at 1144 to 1208 (DMGKIEEMEK…ARRQQLVEKE (65 aa)) forms a coiled coil. Residues 1256–1370 (SKVCRGYLVK…WMDVIVTGAE (115 aa)) enclose the PH domain.

The polypeptide is Pleckstrin homology-like domain family B member 1 (PHLDB1) (Homo sapiens (Human)).